Reading from the N-terminus, the 200-residue chain is Urease accessory protein UreE (200 aa).

The disordered stretch occupies residues 171 to 200 (HHGHAHPHPHDHDHQHGPGCAHGRHGHDHH).

This sequence belongs to the UreE family.

It localises to the cytoplasm. Functionally, involved in urease metallocenter assembly. Binds nickel. Probably functions as a nickel donor during metallocenter assembly. This Burkholderia vietnamiensis (strain G4 / LMG 22486) (Burkholderia cepacia (strain R1808)) protein is Urease accessory protein UreE.